Here is a 928-residue protein sequence, read N- to C-terminus: G-protein coupled receptor family C group 6 member A (928 aa).

Residues M1–S20 form the signal peptide. Residues C21–A594 are Extracellular-facing. N332, N555, and N567 each carry an N-linked (GlcNAc...) asparagine glycan. A helical membrane pass occupies residues L595 to F615. Residues T616–L630 lie on the Cytoplasmic side of the membrane. The chain crosses the membrane as a helical span at residues V631–I651. Topologically, residues G652–S669 are extracellular. The chain crosses the membrane as a helical span at residues F670–F690. Over D691 to P706 the chain is Cytoplasmic. The helical transmembrane segment at I707–A727 threads the bilayer. At P728–L750 the chain is on the extracellular side. The helical transmembrane segment at A751–F771 threads the bilayer. Residues K772–K784 are Cytoplasmic-facing. A helical transmembrane segment spans residues F785–T805. Residues T806–L812 are Extracellular-facing. A helical membrane pass occupies residues P813–F833. The Cytoplasmic segment spans residues P834–I928.

Belongs to the G-protein coupled receptor 3 family. As to quaternary structure, homodimer; disulfide-linked. Post-translationally, N-glycosylated. As to expression, expressed at high level in liver, lung, spleen and heart. Expressed at lower level in kidney, skeletal muscle and brain. Expressed in 7 dpc, 11 dpc, 15 dpc and 17 dpc embryos.

Its subcellular location is the cell membrane. Its function is as follows. Receptor activated by multiple ligands, including osteocalcin (BGLAP), basic amino acids, and various cations. Activated by amino acids with a preference for basic amino acids such as L-Lys, L-Arg and L-ornithine but also by small and polar amino acids. The L-alpha amino acids respond is augmented by divalent cations Ca(2+) and Mg(2+). Seems to act through a G(q)/G(11) and G(i)-coupled pathway. Regulates testosterone production by acting as a ligand for uncarboxylated osteocalcin hormone: osteocalcin-binding at the surface of Leydig cells initiates a signaling response that promotes the expression of enzymes required for testosterone synthesis in a CREB-dependent manner. Mediates the non-genomic effects of androgens in multiple tissue. May coordinate nutritional and hormonal anabolic signals through the sensing of extracellular amino acids, osteocalcin, divalent ions and its responsiveness to anabolic steroids. The polypeptide is G-protein coupled receptor family C group 6 member A (Gprc6a) (Mus musculus (Mouse)).